The chain runs to 492 residues: Ketol-acid reductoisomerase (NADP(+)) (492 aa).

Residues 15–208 (AQLGKCRFMA…GGHRAGVLES (194 aa)) enclose the KARI N-terminal Rossmann domain. NADP(+) contacts are provided by residues 45-48 (CGAQ), R68, R76, S78, and 108-110 (DKQ). The active site involves H132. G158 contributes to the NADP(+) binding site. KARI C-terminal knotted domains follow at residues 209–344 (SFVA…NAPQ) and 345–485 (FEGK…MTDM). Mg(2+) is bound by residues D217, E221, E389, and E393. Position 414 (S414) interacts with substrate.

Belongs to the ketol-acid reductoisomerase family. The cofactor is Mg(2+).

It catalyses the reaction (2R)-2,3-dihydroxy-3-methylbutanoate + NADP(+) = (2S)-2-acetolactate + NADPH + H(+). The catalysed reaction is (2R,3R)-2,3-dihydroxy-3-methylpentanoate + NADP(+) = (S)-2-ethyl-2-hydroxy-3-oxobutanoate + NADPH + H(+). The protein operates within amino-acid biosynthesis; L-isoleucine biosynthesis; L-isoleucine from 2-oxobutanoate: step 2/4. It functions in the pathway amino-acid biosynthesis; L-valine biosynthesis; L-valine from pyruvate: step 2/4. Its function is as follows. Involved in the biosynthesis of branched-chain amino acids (BCAA). Catalyzes an alkyl-migration followed by a ketol-acid reduction of (S)-2-acetolactate (S2AL) to yield (R)-2,3-dihydroxy-isovalerate. In the isomerase reaction, S2AL is rearranged via a Mg-dependent methyl migration to produce 3-hydroxy-3-methyl-2-ketobutyrate (HMKB). In the reductase reaction, this 2-ketoacid undergoes a metal-dependent reduction by NADPH to yield (R)-2,3-dihydroxy-isovalerate. This Yersinia enterocolitica serotype O:8 / biotype 1B (strain NCTC 13174 / 8081) protein is Ketol-acid reductoisomerase (NADP(+)).